Reading from the N-terminus, the 281-residue chain is ATP synthase subunit a (281 aa).

A run of 7 helical transmembrane segments spans residues lysine 56–phenylalanine 76, leucine 117–alanine 137, isoleucine 144–phenylalanine 164, lysine 181–isoleucine 201, phenylalanine 215–valine 235, isoleucine 237–isoleucine 257, and alanine 259–glutamate 279.

The protein belongs to the ATPase A chain family. In terms of assembly, F-type ATPases have 2 components, CF(1) - the catalytic core - and CF(0) - the membrane proton channel. CF(1) has five subunits: alpha(3), beta(3), gamma(1), delta(1), epsilon(1). CF(0) has three main subunits: a(1), b(2) and c(9-12). The alpha and beta chains form an alternating ring which encloses part of the gamma chain. CF(1) is attached to CF(0) by a central stalk formed by the gamma and epsilon chains, while a peripheral stalk is formed by the delta and b chains.

The protein resides in the cell membrane. Its function is as follows. Key component of the proton channel; it plays a direct role in the translocation of protons across the membrane. In Streptomyces lividans, this protein is ATP synthase subunit a.